A 470-amino-acid chain; its full sequence is Cell division protein FtsA (470 aa).

The interval 416–470 (NKKDTHENEVESTDEEIYQSEDNHQEHKQNHEHVQDKDKDKEESKFKKLMKSLFE) is disordered. The span at 425 to 434 (VESTDEEIYQ) shows a compositional bias: acidic residues. A compositionally biased stretch (basic and acidic residues) spans 436–461 (EDNHQEHKQNHEHVQDKDKDKEESKF).

This sequence belongs to the FtsA/MreB family. Self-interacts. Interacts with FtsZ.

It is found in the cell membrane. In terms of biological role, cell division protein that is involved in the assembly of the Z ring. May serve as a membrane anchor for the Z ring. This chain is Cell division protein FtsA, found in Staphylococcus aureus (strain MSSA476).